A 193-amino-acid polypeptide reads, in one-letter code: dCTP deaminase (193 aa).

DCTP contacts are provided by residues 110-115, Asp-128, 136-138, Tyr-171, Lys-178, and Gln-182; these read RSSLAR and VLE. Glu-138 acts as the Proton donor/acceptor in catalysis. The tract at residues 169-193 is disordered; that stretch reads RPYNSRQDAKYRGQQGAVASRIDKD.

It belongs to the dCTP deaminase family. Homotrimer.

The enzyme catalyses dCTP + H2O + H(+) = dUTP + NH4(+). Its pathway is pyrimidine metabolism; dUMP biosynthesis; dUMP from dCTP (dUTP route): step 1/2. Catalyzes the deamination of dCTP to dUTP. This chain is dCTP deaminase, found in Yersinia pestis bv. Antiqua (strain Antiqua).